Reading from the N-terminus, the 144-residue chain is Eukaryotic translation initiation factor 1A (144 aa).

The span at Met-1–Gly-15 shows a compositional bias: basic residues. 2 disordered regions span residues Met-1–Glu-25 and Asp-120–Ile-144. Basic and acidic residues predominate over residues Lys-16 to Glu-25. Positions Asp-22–Met-96 constitute an S1-like domain.

It belongs to the eIF-1A family.

Its function is as follows. Seems to be required for maximal rate of protein biosynthesis. Enhances ribosome dissociation into subunits and stabilizes the binding of the initiator Met-tRNA(I) to 40 S ribosomal subunits. The polypeptide is Eukaryotic translation initiation factor 1A (Triticum aestivum (Wheat)).